The chain runs to 274 residues: tRNA (mnm(5)s(2)U34)-methyltransferase, chloroplastic (274 aa).

Residues 1–50 (MAAGFFQAEMSILSSTLARSYSLPIRKTLMTFDFRIAMQRNPCLRIRRSC) constitute a chloroplast transit peptide. S-adenosyl-L-methionine-binding residues include Asn-108, Asn-110, Asp-134, Gln-136, and His-166.

Belongs to the methyltransferase superfamily. MnmM family.

It is found in the plastid. The protein resides in the chloroplast. It carries out the reaction 5-aminomethyl-2-thiouridine(34) in tRNA + S-adenosyl-L-methionine = 5-methylaminomethyl-2-thiouridine(34) in tRNA + S-adenosyl-L-homocysteine + H(+). It functions in the pathway tRNA modification. Its function is as follows. Involved in the biosynthesis of 5-methylaminomethyl-2-thiouridine (mnm(5)s(2)U) at the wobble position (U34) in tRNA. Catalyzes the transfer of a methyl group from S-adenosyl-L-methionine to nm(5)s(2)U34 to form mnm(5)s(2)U34. The sequence is that of tRNA (mnm(5)s(2)U34)-methyltransferase, chloroplastic from Arabidopsis thaliana (Mouse-ear cress).